Consider the following 105-residue polypeptide: Thioredoxin (105 aa).

The region spanning 2 to 105 (VKIVGDLTEF…KLEEAIKKYM (104 aa)) is the Thioredoxin domain. Residues C32 and C35 each act as nucleophile in the active site. Cysteines 32 and 35 form a disulfide. S-nitrosocysteine occurs at positions 69 and 73.

This sequence belongs to the thioredoxin family. In terms of processing, may be nitrosylated on several cysteine residues, depending on the oxidation state. Nitrosylated Cys-73 may serve as donor for nitrosylation of target proteins.

The protein resides in the nucleus. It is found in the cytoplasm. It localises to the secreted. Participates in various redox reactions through the reversible oxidation of its active center dithiol to a disulfide and catalyzes dithiol-disulfide exchange reactions. Plays a role in the reversible S-nitrosylation of cysteine residues in target proteins, and thereby contributes to the response to intracellular nitric oxide. Nitrosylates the active site Cys of CASP3 in response to nitric oxide (NO), and thereby inhibits caspase-3 activity. Induces the FOS/JUN AP-1 DNA binding activity in ionizing radiation (IR) cells through its oxidation/reduction status and stimulates AP-1 transcriptional activity. The chain is Thioredoxin (TXN) from Ophiophagus hannah (King cobra).